The chain runs to 250 residues: Hydroxyethylthiazole kinase (250 aa).

M39 provides a ligand contact to substrate. ATP is bound by residues R114 and T159. G186 contributes to the substrate binding site.

This sequence belongs to the Thz kinase family. Mg(2+) is required as a cofactor.

It catalyses the reaction 5-(2-hydroxyethyl)-4-methylthiazole + ATP = 4-methyl-5-(2-phosphooxyethyl)-thiazole + ADP + H(+). Its pathway is cofactor biosynthesis; thiamine diphosphate biosynthesis; 4-methyl-5-(2-phosphoethyl)-thiazole from 5-(2-hydroxyethyl)-4-methylthiazole: step 1/1. Catalyzes the phosphorylation of the hydroxyl group of 4-methyl-5-beta-hydroxyethylthiazole (THZ). This Lactococcus lactis subsp. lactis (strain IL1403) (Streptococcus lactis) protein is Hydroxyethylthiazole kinase.